A 289-amino-acid chain; its full sequence is GTPase Era (289 aa).

The 166-residue stretch at 2 to 167 (KSGFVSLIGR…LREIAKLLPE (166 aa)) folds into the Era-type G domain. Residues 10–17 (GRTNAGKS) are G1. Position 10–17 (10–17 (GRTNAGKS)) interacts with GTP. Positions 36-40 (NATRR) are G2. The interval 57-60 (DTPG) is G3. Residues 57–61 (DTPGL) and 116–119 (TKTD) contribute to the GTP site. The G4 stretch occupies residues 116–119 (TKTD). Positions 146-148 (VNI) are G5. Positions 186-274 (YRDFILESVY…HLNLQIFVKK (89 aa)) constitute a KH type-2 domain.

It belongs to the TRAFAC class TrmE-Era-EngA-EngB-Septin-like GTPase superfamily. Era GTPase family. In terms of assembly, monomer.

Its subcellular location is the cytoplasm. It is found in the cell inner membrane. An essential GTPase that binds both GDP and GTP, with rapid nucleotide exchange. Plays a role in 16S rRNA processing and 30S ribosomal subunit biogenesis and possibly also in cell cycle regulation and energy metabolism. The sequence is that of GTPase Era from Campylobacter hominis (strain ATCC BAA-381 / DSM 21671 / CCUG 45161 / LMG 19568 / NCTC 13146 / CH001A).